The primary structure comprises 58 residues: UPF0391 membrane protein Shewmr4_2671 (58 aa).

The next 2 membrane-spanning stretches (helical) occupy residues 6–26 (LMFLVVAIIAGLFGFTGIAGA) and 28–48 (AGIAKIIFFLFIVLLVISLLV).

The protein belongs to the UPF0391 family.

The protein localises to the cell membrane. This chain is UPF0391 membrane protein Shewmr4_2671, found in Shewanella sp. (strain MR-4).